Reading from the N-terminus, the 125-residue chain is Glycine cleavage system H protein (125 aa).

The Lipoyl-binding domain occupies 22-104 (SYVIGITDFA…YDTGWILKLE (83 aa)). The residue at position 63 (Lys63) is an N6-lipoyllysine.

It belongs to the GcvH family. As to quaternary structure, the glycine cleavage system is composed of four proteins: P, T, L and H. Requires (R)-lipoate as cofactor.

Functionally, the glycine cleavage system catalyzes the degradation of glycine. The H protein shuttles the methylamine group of glycine from the P protein to the T protein. Its function is as follows. Is also involved in protein lipoylation via its role as an octanoyl/lipoyl carrier protein intermediate. In Listeria monocytogenes serotype 4a (strain HCC23), this protein is Glycine cleavage system H protein.